Reading from the N-terminus, the 389-residue chain is Chalcone synthase 6 (389 aa).

C164 is a catalytic residue.

This sequence belongs to the thiolase-like superfamily. Chalcone/stilbene synthases family.

It catalyses the reaction (E)-4-coumaroyl-CoA + 3 malonyl-CoA + 3 H(+) = 2',4,4',6'-tetrahydroxychalcone + 3 CO2 + 4 CoA. It functions in the pathway secondary metabolite biosynthesis; flavonoid biosynthesis. Its function is as follows. The primary product of this enzyme is 4,2',4',6'-tetrahydroxychalcone (also termed naringenin-chalcone or chalcone) which can under specific conditions spontaneously isomerize into naringenin. In Trifolium subterraneum (Subterranean clover), this protein is Chalcone synthase 6 (CHS6).